A 612-amino-acid chain; its full sequence is Dihydroxy-acid dehydratase (612 aa).

Asp-81 serves as a coordination point for Mg(2+). Cys-122 serves as a coordination point for [2Fe-2S] cluster. Residues Asp-123 and Lys-124 each contribute to the Mg(2+) site. Residue Lys-124 is modified to N6-carboxylysine. [2Fe-2S] cluster is bound at residue Cys-193. Residue Glu-489 coordinates Mg(2+). Catalysis depends on Ser-515, which acts as the Proton acceptor.

It belongs to the IlvD/Edd family. As to quaternary structure, homodimer. [2Fe-2S] cluster serves as cofactor. The cofactor is Mg(2+).

The enzyme catalyses (2R)-2,3-dihydroxy-3-methylbutanoate = 3-methyl-2-oxobutanoate + H2O. It carries out the reaction (2R,3R)-2,3-dihydroxy-3-methylpentanoate = (S)-3-methyl-2-oxopentanoate + H2O. It participates in amino-acid biosynthesis; L-isoleucine biosynthesis; L-isoleucine from 2-oxobutanoate: step 3/4. The protein operates within amino-acid biosynthesis; L-valine biosynthesis; L-valine from pyruvate: step 3/4. Functions in the biosynthesis of branched-chain amino acids. Catalyzes the dehydration of (2R,3R)-2,3-dihydroxy-3-methylpentanoate (2,3-dihydroxy-3-methylvalerate) into 2-oxo-3-methylpentanoate (2-oxo-3-methylvalerate) and of (2R)-2,3-dihydroxy-3-methylbutanoate (2,3-dihydroxyisovalerate) into 2-oxo-3-methylbutanoate (2-oxoisovalerate), the penultimate precursor to L-isoleucine and L-valine, respectively. The sequence is that of Dihydroxy-acid dehydratase from Pseudomonas aeruginosa (strain LESB58).